The primary structure comprises 155 residues: Ribosomal RNA large subunit methyltransferase H (155 aa).

Residues Leu73, Gly104, and 123 to 128 (LSPLTL) contribute to the S-adenosyl-L-methionine site.

This sequence belongs to the RNA methyltransferase RlmH family. In terms of assembly, homodimer.

It is found in the cytoplasm. The catalysed reaction is pseudouridine(1915) in 23S rRNA + S-adenosyl-L-methionine = N(3)-methylpseudouridine(1915) in 23S rRNA + S-adenosyl-L-homocysteine + H(+). In terms of biological role, specifically methylates the pseudouridine at position 1915 (m3Psi1915) in 23S rRNA. The sequence is that of Ribosomal RNA large subunit methyltransferase H from Pseudomonas putida (strain ATCC 700007 / DSM 6899 / JCM 31910 / BCRC 17059 / LMG 24140 / F1).